Consider the following 100-residue polypeptide: Small ribosomal subunit protein uS14c (100 aa).

This sequence belongs to the universal ribosomal protein uS14 family. As to quaternary structure, part of the 30S ribosomal subunit.

The protein localises to the plastid. It is found in the chloroplast. In terms of biological role, binds 16S rRNA, required for the assembly of 30S particles. The chain is Small ribosomal subunit protein uS14c from Barbarea verna (Land cress).